The primary structure comprises 1215 residues: von Willebrand factor A domain-containing protein 5B1 (1215 aa).

Residues Met1–Ser18 form the signal peptide. One can recognise a VIT domain in the interval Asp19–Ser141. Residue Asn132 is glycosylated (N-linked (GlcNAc...) asparagine). The VWFA domain occupies Glu353 to Val532. The interval Ser595–Pro674 is disordered. Composition is skewed to polar residues over residues Gly608–Thr621 and Tyr646–Thr667. At Tyr879 the chain carries Phosphotyrosine. Disordered regions lie at residues Gly934 to Ala953, Gln964 to Ser999, and Ser1100 to Ser1121. 3 stretches are compositionally biased toward polar residues: residues Gln964–Pro975, Gln990–Ser999, and Ser1100–Pro1112.

The protein localises to the secreted. The protein is von Willebrand factor A domain-containing protein 5B1 (Vwa5b1) of Mus musculus (Mouse).